The primary structure comprises 397 residues: CCA-adding enzyme (397 aa).

ATP is bound by residues G26 and R29. Residues G26 and R29 each contribute to the CTP site. 2 residues coordinate Mg(2+): D39 and D41. ATP contacts are provided by R110, D153, R156, R159, and R162. CTP contacts are provided by R110, D153, R156, R159, and R162.

The protein belongs to the tRNA nucleotidyltransferase/poly(A) polymerase family. Bacterial CCA-adding enzyme type 3 subfamily. In terms of assembly, homodimer. Mg(2+) is required as a cofactor.

It carries out the reaction a tRNA precursor + 2 CTP + ATP = a tRNA with a 3' CCA end + 3 diphosphate. The catalysed reaction is a tRNA with a 3' CCA end + 2 CTP + ATP = a tRNA with a 3' CCACCA end + 3 diphosphate. Functionally, catalyzes the addition and repair of the essential 3'-terminal CCA sequence in tRNAs without using a nucleic acid template. Adds these three nucleotides in the order of C, C, and A to the tRNA nucleotide-73, using CTP and ATP as substrates and producing inorganic pyrophosphate. tRNA 3'-terminal CCA addition is required both for tRNA processing and repair. Also involved in tRNA surveillance by mediating tandem CCA addition to generate a CCACCA at the 3' terminus of unstable tRNAs. While stable tRNAs receive only 3'-terminal CCA, unstable tRNAs are marked with CCACCA and rapidly degraded. The chain is CCA-adding enzyme from Bacillus cereus (strain 03BB102).